A 482-amino-acid chain; its full sequence is Glutamate--tRNA ligase 2 (482 aa).

Residues 8–18 (PSPTGQLHIGG) carry the 'HIGH' region motif. The 'KMSKS' region signature appears at 249-253 (KLSKR). Residue Lys-252 coordinates ATP.

This sequence belongs to the class-I aminoacyl-tRNA synthetase family. Glutamate--tRNA ligase type 1 subfamily. As to quaternary structure, monomer.

Its subcellular location is the cytoplasm. The catalysed reaction is tRNA(Glu) + L-glutamate + ATP = L-glutamyl-tRNA(Glu) + AMP + diphosphate. Catalyzes the attachment of glutamate to tRNA(Glu) in a two-step reaction: glutamate is first activated by ATP to form Glu-AMP and then transferred to the acceptor end of tRNA(Glu). The sequence is that of Glutamate--tRNA ligase 2 from Caldicellulosiruptor saccharolyticus (strain ATCC 43494 / DSM 8903 / Tp8T 6331).